A 103-amino-acid polypeptide reads, in one-letter code: Large ribosomal subunit protein uL23 (103 aa).

This sequence belongs to the universal ribosomal protein uL23 family. In terms of assembly, part of the 50S ribosomal subunit. Contacts protein L29, and trigger factor when it is bound to the ribosome.

One of the early assembly proteins it binds 23S rRNA. One of the proteins that surrounds the polypeptide exit tunnel on the outside of the ribosome. Forms the main docking site for trigger factor binding to the ribosome. The sequence is that of Large ribosomal subunit protein uL23 from Chlorobium chlorochromatii (strain CaD3).